The primary structure comprises 69 residues: Large ribosomal subunit protein bL28 (69 aa).

The protein belongs to the bacterial ribosomal protein bL28 family.

In Desulfovibrio desulfuricans (strain ATCC 27774 / DSM 6949 / MB), this protein is Large ribosomal subunit protein bL28.